Here is a 476-residue protein sequence, read N- to C-terminus: Aspartate kinase Ask_Ect (476 aa).

One can recognise an ACT domain in the interval Ser405–Ala476.

Belongs to the aspartokinase family. Monomer.

It localises to the cytoplasm. It catalyses the reaction L-aspartate + ATP = 4-phospho-L-aspartate + ADP. It participates in amine and polyamine biosynthesis; ectoine biosynthesis. Its activity is regulated as follows. Allosterically and strongly feedback inhibited by tryptophan. The presence of either 650 mM NaCl or KCl reduces the inhibition by tryptophan. In terms of biological role, involved in the biosynthesis of L-aspartate-beta-semialdehyde, which is an intermediate in the biosynthesis of ectoine, a highly soluble organic osmolyte, called compatible solute. Ectoine is used to avoid excessive water efflux, plasmolysis, molecular crowding of the cytoplasm, and cessation of growth in high salinity environments. Catalyzes the phosphorylation of the beta-carboxyl group of L-aspartate to yield 4-phospho-L-aspartate. The sequence is that of Aspartate kinase Ask_Ect (ask) from Stutzerimonas stutzeri (strain A1501) (Pseudomonas stutzeri).